The chain runs to 710 residues: MLSLQYPDVYRDETAVQDYHGHKICDPYAWLEDPDSEQTKAFVEAQNKITVPFLEQCPIRGLYKERMTELYDYPKYSCHFKKGKRYFYFYNTGLQNQRVLYVQDSLEGEARVFLDPNILSDDGTVALRGYAFSEDGEYFAYGLSASGSDWVTIKFMKVDGAKELPDVLERVKFSCMAWTHDGKGMFYNSYPQQDGKSDGTETSTNLHQKLYYHVLGTDQSEDILCAEFPDEPKWMGGAELSDDGRYVLLSIREGCDPVNRLWYCDLQQESSGIAGILKWVKLIDNFEGEYDYVTNEGTVFTFKTNRQSPNYRVINIDFRDPEESKWKVLVPEHEKDVLEWIACVRSNFLVLCYLHDVKNILQLHDLTTGALLKTFPLDVGSIVGYSGQKKDTEIFYQFTSFLSPGIIYHCDLTKEELEPRVFREVTVKGIDASDYQTVQIFYPSKDGTKIPMFIVHKKGIKLDGSHPAFLYGYGGFNISITPNYSVSRLIFVRHMGGILAVANIRGGGEYGETWHKGGILANKQNCFDDFQCAAEYLIKEGYTSPKRLTINGGSNGGLLVAACANQRPDLFGCVIAQVGVMDMLKFHKYTIGHAWTTDYGCSDSKQHFEWLVKYSPLHNVKLPEADDIQYPSMLLLTADHDDRVVPLHSLKFIATLQYIVGRSRKQSNPLLIHVDTKAGHGAGKPTAKVIEEVSDMFAFIARCLNVDWIP.

The residue at position 1 (methionine 1) is an N-acetylmethionine. The residue at position 157 (lysine 157) is an N6-acetyllysine. Active-site charge relay system residues include serine 554, aspartate 641, and histidine 680.

It belongs to the peptidase S9A family. Monomer. In terms of processing, the N-terminus is blocked.

The protein resides in the cytoplasm. It carries out the reaction Hydrolysis of Pro-|-Xaa &gt;&gt; Ala-|-Xaa in oligopeptides.. Cleaves peptide bonds on the C-terminal side of prolyl residues within peptides that are up to approximately 30 amino acids long. The protein is Prolyl endopeptidase (PREP) of Homo sapiens (Human).